Consider the following 91-residue polypeptide: uncharacterized protein (91 aa).

In terms of domain architecture, Integrase catalytic spans 1–91 (MLTFWHWKWL…YQNILRENGI (91 aa)).

This is an uncharacterized protein from Haemophilus influenzae (strain ATCC 51907 / DSM 11121 / KW20 / Rd).